The sequence spans 323 residues: Acetyl-coenzyme A carboxylase carboxyl transferase subunit alpha (323 aa).

The 255-residue stretch at 39-293 folds into the CoA carboxyltransferase C-terminal domain; it reads RLSKKSQQLT…RRALADSLRQ (255 aa).

Belongs to the AccA family. In terms of assembly, acetyl-CoA carboxylase is a heterohexamer composed of biotin carboxyl carrier protein (AccB), biotin carboxylase (AccC) and two subunits each of ACCase subunit alpha (AccA) and ACCase subunit beta (AccD).

It localises to the cytoplasm. The enzyme catalyses N(6)-carboxybiotinyl-L-lysyl-[protein] + acetyl-CoA = N(6)-biotinyl-L-lysyl-[protein] + malonyl-CoA. It functions in the pathway lipid metabolism; malonyl-CoA biosynthesis; malonyl-CoA from acetyl-CoA: step 1/1. Component of the acetyl coenzyme A carboxylase (ACC) complex. First, biotin carboxylase catalyzes the carboxylation of biotin on its carrier protein (BCCP) and then the CO(2) group is transferred by the carboxyltransferase to acetyl-CoA to form malonyl-CoA. This Burkholderia lata (strain ATCC 17760 / DSM 23089 / LMG 22485 / NCIMB 9086 / R18194 / 383) protein is Acetyl-coenzyme A carboxylase carboxyl transferase subunit alpha.